We begin with the raw amino-acid sequence, 69 residues long: Putative membrane protein insertion efficiency factor (69 aa).

This sequence belongs to the UPF0161 family.

It is found in the cell membrane. Could be involved in insertion of integral membrane proteins into the membrane. This Clostridium kluyveri (strain NBRC 12016) protein is Putative membrane protein insertion efficiency factor.